A 234-amino-acid chain; its full sequence is Uridylate kinase (234 aa).

Residue 9 to 12 participates in ATP binding; the sequence is KLSG. A UMP-binding site is contributed by G51. The ATP site is built by G52 and R56. UMP-binding positions include D71 and 132-139; that span reads CGNPFFTT. ATP-binding residues include T159, Y165, and D168.

Belongs to the UMP kinase family. In terms of assembly, homohexamer.

Its subcellular location is the cytoplasm. The catalysed reaction is UMP + ATP = UDP + ADP. Its pathway is pyrimidine metabolism; CTP biosynthesis via de novo pathway; UDP from UMP (UMPK route): step 1/1. With respect to regulation, inhibited by UTP. Functionally, catalyzes the reversible phosphorylation of UMP to UDP. This Prochlorococcus marinus (strain MIT 9215) protein is Uridylate kinase.